Consider the following 180-residue polypeptide: NADH-quinone oxidoreductase subunit I (180 aa).

4Fe-4S ferredoxin-type domains follow at residues Leu50–Ala80 and Glu90–Asp119. Cys60, Cys63, Cys66, Cys70, Cys99, Cys102, Cys105, and Cys109 together coordinate [4Fe-4S] cluster.

This sequence belongs to the complex I 23 kDa subunit family. In terms of assembly, NDH-1 is composed of 13 different subunits. Subunits NuoA, H, J, K, L, M, N constitute the membrane sector of the complex. Requires [4Fe-4S] cluster as cofactor.

Its subcellular location is the cell inner membrane. The enzyme catalyses a quinone + NADH + 5 H(+)(in) = a quinol + NAD(+) + 4 H(+)(out). Functionally, NDH-1 shuttles electrons from NADH, via FMN and iron-sulfur (Fe-S) centers, to quinones in the respiratory chain. The immediate electron acceptor for the enzyme in this species is believed to be ubiquinone. Couples the redox reaction to proton translocation (for every two electrons transferred, four hydrogen ions are translocated across the cytoplasmic membrane), and thus conserves the redox energy in a proton gradient. The sequence is that of NADH-quinone oxidoreductase subunit I from Pectobacterium atrosepticum (strain SCRI 1043 / ATCC BAA-672) (Erwinia carotovora subsp. atroseptica).